A 368-amino-acid polypeptide reads, in one-letter code: 3-dehydroquinate synthase (368 aa).

NAD(+) contacts are provided by residues 80-85 (DAESAK), 114-118 (GAATD), 138-139 (TT), Lys-151, and Lys-160. Zn(2+) contacts are provided by Glu-193, His-255, and His-271.

The protein belongs to the sugar phosphate cyclases superfamily. Dehydroquinate synthase family. The cofactor is Co(2+). Requires Zn(2+) as cofactor. NAD(+) is required as a cofactor.

The protein localises to the cytoplasm. The catalysed reaction is 7-phospho-2-dehydro-3-deoxy-D-arabino-heptonate = 3-dehydroquinate + phosphate. It functions in the pathway metabolic intermediate biosynthesis; chorismate biosynthesis; chorismate from D-erythrose 4-phosphate and phosphoenolpyruvate: step 2/7. Its function is as follows. Catalyzes the conversion of 3-deoxy-D-arabino-heptulosonate 7-phosphate (DAHP) to dehydroquinate (DHQ). The polypeptide is 3-dehydroquinate synthase (Corynebacterium jeikeium (strain K411)).